A 216-amino-acid polypeptide reads, in one-letter code: MNHIFRRSIPITARLPSLGIRSLATATASAHPPVQLYGLDGSYASSLYTAAVKESKLDNVEKALNKLSGVLQQRPEFEQYISSPWLTREDKKILVSSLTQMTGNEPLLKNFYNVLLDNHRLYLLTRIQKQFSTLMRAKRGEIEVKITSATPLDSKILSRLESRIAKSKYGKGKLLVSNKVTPSIIGGLIVEIGDNILDVSVGSRLNNLNKLLSEPI.

It belongs to the ATPase delta chain family. As to quaternary structure, F-type ATPases have 2 components, CF(1) - the catalytic core - and CF(0) - the membrane proton channel. CF(1) has five subunits: alpha(3), beta(3), gamma(1), delta(1), epsilon(1). CF(0) has three main subunits: a, b and c.

The protein resides in the mitochondrion. The protein localises to the mitochondrion inner membrane. Mitochondrial membrane ATP synthase (F(1)F(0) ATP synthase or Complex V) produces ATP from ADP in the presence of a proton gradient across the membrane which is generated by electron transport complexes of the respiratory chain. F-type ATPases consist of two structural domains, F(1) - containing the extramembraneous catalytic core and F(0) - containing the membrane proton channel, linked together by a central stalk and a peripheral stalk. During catalysis, ATP synthesis in the catalytic domain of F(1) is coupled via a rotary mechanism of the central stalk subunits to proton translocation. Part of the complex F(0) domain and the peripheric stalk, which acts as a stator to hold the catalytic alpha(3)beta(3) subcomplex and subunit a/ATP6 static relative to the rotary elements. This is ATP synthase subunit 5, mitochondrial (atp5) from Schizosaccharomyces pombe (strain 972 / ATCC 24843) (Fission yeast).